A 108-amino-acid chain; its full sequence is Insulin-1 (108 aa).

The N-terminal stretch at 1-24 (MALLVHFLPLLALLALWEPKPTQA) is a signal peptide. Cystine bridges form between Cys31–Cys94, Cys43–Cys107, and Cys93–Cys98. The propeptide at 57 to 85 (EVEDPQVEQLELGGSPGDLQTLALEVARQ) is c peptide.

This sequence belongs to the insulin family. Heterodimer of a B chain and an A chain linked by two disulfide bonds.

The protein localises to the secreted. Functionally, insulin decreases blood glucose concentration. It increases cell permeability to monosaccharides, amino acids and fatty acids. It accelerates glycolysis, the pentose phosphate cycle, and glycogen synthesis in liver. The polypeptide is Insulin-1 (Ins1) (Mus musculus (Mouse)).